Reading from the N-terminus, the 209-residue chain is MIRFITLQNLMDYQVTLKLMEDYVNKVINDNEPEIVYLVEHSEVYTAGTNYKQEELLNYDDIPVIYTGRGGKFTFHGPGQRVIYPILNLALPNRHKDLKLYIKMLEEWIINSLNYFGIKGYLIKDKVGIWIKVNKGEFAKIAAIGVRVRKWVTYHGIAINISTDLCKFNGIIPCGLESSLVTSLNQLGIYVEMSEFDKIIQTEFNKIFK.

One can recognise a BPL/LPL catalytic domain in the interval 30-209 (DNEPEIVYLV…IQTEFNKIFK (180 aa)). Residues 69-76 (RGGKFTFH), 143-145 (AIG), and 156-158 (GIA) each bind substrate. Cysteine 174 acts as the Acyl-thioester intermediate in catalysis.

This sequence belongs to the LipB family.

Its subcellular location is the cytoplasm. It carries out the reaction octanoyl-[ACP] + L-lysyl-[protein] = N(6)-octanoyl-L-lysyl-[protein] + holo-[ACP] + H(+). It participates in protein modification; protein lipoylation via endogenous pathway; protein N(6)-(lipoyl)lysine from octanoyl-[acyl-carrier-protein]: step 1/2. Catalyzes the transfer of endogenously produced octanoic acid from octanoyl-acyl-carrier-protein onto the lipoyl domains of lipoate-dependent enzymes. Lipoyl-ACP can also act as a substrate although octanoyl-ACP is likely to be the physiological substrate. In Rickettsia prowazekii (strain Madrid E), this protein is Octanoyltransferase.